Consider the following 436-residue polypeptide: MPLLNEYIRQLLPEMTQWRRDLHHYAESGWVEFRTASKVAEQLHQLGYDLTLGRDAVDADSRMGLPDEITLANAFQRAREQGAPEPWLSAFEGGFTGIVATLDTGRPGPTLAFRVDMDALDLNEDTDGHHRPFREDFASCNPGMMHACGHDGHTAIGLGLAHVLKQYADRLHGVIKLIFQPAEEGTRGARAMVAAGVVDDVDYFTAIHIGTGVPAGTVVCGSDNFMATTKFDALFTGVAAHAGGKPEDGRNALLAAAQAAIALHAIAPHSAGASRVNVGVMQAGTGRNVVPSGALLKVETRGETEDINRYVFERAREVIHGAAAMYGASVELRLMGAATSSAPSPGWVHYLREQAARVPGVEQAIDRIAAPAGSEDATLMMARVQQHNGLASYMVFGTELSAGHHNEQFDFDENVMAIAVETLALTALNFPWQRGV.

Belongs to the peptidase M20 family. In terms of assembly, monomer.

The catalysed reaction is (indol-3-yl)acetyl-L-aspartate + H2O = (indol-3-yl)acetate + L-aspartate. Its function is as follows. Hydrolyzes indole-3-acetyl-aspartate (IAA-Asp) to indole-3-acetic acid (IAA). Shows an exclusively high substrate specificity for IAA-Asp. In Enterobacter agglomerans (Erwinia herbicola), this protein is Indole-3-acetyl-aspartic acid hydrolase.